A 440-amino-acid polypeptide reads, in one-letter code: SET domain-containing protein 4 (440 aa).

Residues 1–16 are compositionally biased toward basic residues; sequence MQKGKGRTSRIRRRKL. Residues 1–24 form a disordered region; the sequence is MQKGKGRTSRIRRRKLCGSSESRG. Positions 48–273 constitute an SET domain; the sequence is SNLAPACFPG…KHEEVFICYG (226 aa). Tyrosine 272 is a binding site for S-adenosyl-L-methionine.

This sequence belongs to the class V-like SAM-binding methyltransferase superfamily. SETD4 family. Forms a ternary complex with TBK1 and ZNF268; the interaction with TBK1 is ZNF268-dependent and leads to TBK1 monomethylation.

The protein localises to the cytoplasm. It is found in the cytosol. It localises to the nucleus. The enzyme catalyses L-lysyl(4)-[histone H3] + S-adenosyl-L-methionine = N(6)-methyl-L-lysyl(4)-[histone H3] + S-adenosyl-L-homocysteine + H(+). It catalyses the reaction N(6)-methyl-L-lysyl(4)-[histone H3] + S-adenosyl-L-methionine = N(6),N(6)-dimethyl-L-lysyl(4)-[histone H3] + S-adenosyl-L-homocysteine + H(+). It carries out the reaction L-lysyl(20)-[histone H4] + S-adenosyl-L-methionine = N(6)-methyl-L-lysyl(20)-[histone H4] + S-adenosyl-L-homocysteine + H(+). The catalysed reaction is N(6)-methyl-L-lysyl(20)-[histone H4] + S-adenosyl-L-methionine = N(6),N(6)-dimethyl-L-lysyl(20)-[histone H4] + S-adenosyl-L-homocysteine + H(+). The enzyme catalyses N(6),N(6)-dimethyl-L-lysyl(20)-[histone H4] + S-adenosyl-L-methionine = N(6),N(6),N(6)-trimethyl-L-lysyl(20)-[histone H4] + S-adenosyl-L-homocysteine + H(+). It catalyses the reaction L-lysyl-[protein] + S-adenosyl-L-methionine = N(6)-methyl-L-lysyl-[protein] + S-adenosyl-L-homocysteine + H(+). Its function is as follows. Protein-lysine N-methyltransferase that methylates both histones and non-histone proteins. Via its catalytic activity, regulates many processes, including cell proliferation, cell differentiation, inflammatory response and apoptosis. Regulates the inflammatory response by mediating mono- and dimethylation of 'Lys-4' of histone H3 (H3K4me1 and H3K4me2, respectively), leading to activate the transcription of pro-inflammatory cytokines IL6 and TNF-alpha. Through the catalysis of TBK1 monomethylation, may regulate virus-induced interferon signaling. TBK1 monomethylation enhances its interaction with MAVS, STING and IRF3, hence promoting antiviral interferon signaling. Also involved in the regulation of stem cell quiescence by catalyzing the trimethylation of 'Lys-20' of histone H4 (H4K20me3), thereby promoting heterochromatin formation. In the brain, epigenetically controls quiescence of neural stem cells for sustaining a protected neural stem cell population and maintaining a stem cell reservoir for neurogenesis. Involved in proliferation, migration, paracrine and myogenic differentiation of bone marrow mesenchymal stem cells (BMSCs). Through the catalysis of XRCC5/Ku70 trimethylation, regulates BAX-mediated apoptosis. SETD4-catalyzed XRCC5 methylation results in XRCC5 translocation to the cytoplasm, where it interacts with BAX, sequestering it from the mitochondria, hence preventing BAX-mediated apoptosis. The chain is SET domain-containing protein 4 from Homo sapiens (Human).